The sequence spans 250 residues: Acidic leucine-rich nuclear phosphoprotein 32 family member E (250 aa).

Serine 8 carries the phosphoserine modification. LRR repeat units follow at residues 43–64 (ELEF…PSLP), 65–87 (KLRK…AEKC), and 89–110 (NLTY…EALQ). One can recognise an LRRCT domain in the interval 123-161 (CEITTLEDYRESIFELLPQVTYLDGFDAEDNEAPDSEAD). Composition is skewed to acidic residues over residues 149–171 (DAED…DGDE), 178–191 (EYEE…EGSE), and 205–227 (IQDE…EEEA). Positions 149 to 250 (DAEDNEAPDS…EGEDDDEDDD (102 aa)) are disordered. The segment at 194-247 (EVGLSYLMKEDIQDEEDDDDYVEEEEEEGGEEEADVRGEKRKREAEDEGEDDDE) is ZID domain. Basic and acidic residues predominate over residues 228 to 238 (DVRGEKRKREA). Positions 239 to 250 (EDEGEDDDEDDD) are enriched in acidic residues.

This sequence belongs to the ANP32 family. As to quaternary structure, component of a SWR1-like complex. Interacts with H2A.Z/H2AZ1. In terms of processing, phosphorylated. The phosphorylation is nuclear localization signal (NLS)-dependent.

It localises to the cytoplasm. Its subcellular location is the nucleus. Functionally, histone chaperone that specifically mediates the genome-wide removal of histone H2A.Z/H2AZ1 from the nucleosome: removes H2A.Z/H2AZ1 from its normal sites of deposition, especially from enhancer and insulator regions. Not involved in deposition of H2A.Z/H2AZ1 in the nucleosome. May stabilize the evicted H2A.Z/H2AZ1-H2B dimer, thus shifting the equilibrium towards dissociation and the off-chromatin state. Inhibits activity of protein phosphatase 2A (PP2A). Does not inhibit protein phosphatase 1. May play a role in cerebellar development and synaptogenesis. The polypeptide is Acidic leucine-rich nuclear phosphoprotein 32 family member E (anp32e) (Danio rerio (Zebrafish)).